Reading from the N-terminus, the 180-residue chain is Lipid droplet coating protein Cap20 (180 aa).

It belongs to the perilipin family. Interacts with class I hydrophobin Hydr1. Interacts also with the cAMP-dependent protein kinase catalytic subunit PkaC1.

The protein resides in the lipid droplet. Its function is as follows. Lipid droplet coating protein that regulates lipid metabolism, appressorial turgor pressure, and virulence. Mature appressoria with high turgor pressure are essential to penetrate the leaf surface. This is Lipid droplet coating protein Cap20 from Colletotrichum siamense (Anthracnose fungus).